The primary structure comprises 393 residues: uncharacterized protein (393 aa).

Positions 72, 82, 85, and 160 each coordinate [4Fe-4S] cluster. Residues glutamine 215, phenylalanine 245, glutamate 267, and aspartate 313 each coordinate S-adenosyl-L-methionine. Cysteine 340 serves as the catalytic Nucleophile.

The protein belongs to the class I-like SAM-binding methyltransferase superfamily. RNA M5U methyltransferase family.

This is an uncharacterized protein from Nitrosomonas europaea (strain ATCC 19718 / CIP 103999 / KCTC 2705 / NBRC 14298).